The primary structure comprises 338 residues: Microtubule-associated protein RP/EB family member 2 (338 aa).

A disordered region spans residues 1–21; sequence MPGPTQALSPNGENNNDIIQD. A Calponin-homology (CH) domain is found at 57–159; that stretch reads TMSRHDIIAW…FIQWFKKFFD (103 aa). Disordered stretches follow at residues 171-241 and 300-338; these read EARQ…KDLE and SEEH…FHFV. The segment covering 200–234 has biased composition (low complexity); it reads SPTAGAAKSSPASKPGSTPSRPSSAKKAAPSSSAS. The region spanning 236–306 is the EB1 C-terminal domain; sequence SDKDLETQVI…LYASEEHESH (71 aa). The span at 300-327 shows a compositional bias: basic and acidic residues; sequence SEEHESHTEEHEGEEQVHEQPSSRRSTD. Residues 328 to 338 show a composition bias toward low complexity; sequence SRSVSDNFHFV.

It belongs to the MAPRE family.

It is found in the cytoplasm. Its subcellular location is the cytoskeleton. Functionally, may be involved in microtubule polymerization, and spindle function by stabilizing microtubules and anchoring them at centrosomes. The chain is Microtubule-associated protein RP/EB family member 2 (MAPRE2) from Gallus gallus (Chicken).